A 712-amino-acid polypeptide reads, in one-letter code: MATFLLEVGTEELPASFVESAIQQWRSHIPNSLEEHLLTPQSLKVYGTPRRLAILAEGLPDQQPDQTVEVKGPPAKAAFKDGKPTKAAEGFARKQGVEIKDFELRDTEKGEFIFVQKTTLGKPAVDVLADLIPTWIFSLEGKRFMRWSDGEVKFSRPIRWLVSLLDDHLIPIKLENSTGTISSDRTSSGHRVLHPDPVTIKHPQDYVATLEKASVQVDPEQRQTLIKEQVHACAKAVKGKAVISEDLLAEVTYLVEWPTAVVGGFESEFLELPAEVITTEMVSHQRYFPVEAPKGAKLLPHFITISNGDPAKSDIISSGNERVIRARLADGQFFYKADQAMPLAEYLPKLETVTFQEDLGSVRAKVDRIQANALWVAKQLQLDQKVTQQVERAAQLCKADLVTQMVGEFPELQGVMGEKYAIASGEPTEIATAIVEHYLPKGANDQLPQTLVGQIVGIADRLDTLVSIFGLGMIPTGSSDPFALRRAANAILNIVWAANLDLNLDQLLTETTAAFAQTFAKFQPEVQQLRDFFGQRLRSLLQDEQTIDYDLVNAVLGEKGEHTQRVLVDVLDGRDRAQYLQTIRTNGTLDTIYETVNRAARLATKGDLASDVLDPKGVVQPKLFEQSSEQVFYDGLLTLLPQTQAAQSSRDYQKLVQGLTKIAPSVSQFFDGDDSVLVIAEDADLRANRLNLLGLLRNHALVLGDFGAIVKS.

This sequence belongs to the class-II aminoacyl-tRNA synthetase family. As to quaternary structure, tetramer of two alpha and two beta subunits.

The protein localises to the cytoplasm. The enzyme catalyses tRNA(Gly) + glycine + ATP = glycyl-tRNA(Gly) + AMP + diphosphate. The protein is Glycine--tRNA ligase beta subunit of Acaryochloris marina (strain MBIC 11017).